Consider the following 118-residue polypeptide: NADH-quinone oxidoreductase subunit A (118 aa).

The next 3 membrane-spanning stretches (helical) occupy residues 6-26 (LIIG…LLTA), 61-81 (FMYG…LPWA), and 87-107 (LGLF…IGLW).

Belongs to the complex I subunit 3 family. As to quaternary structure, NDH-1 is composed of 14 different subunits. Subunits NuoA, H, J, K, L, M, N constitute the membrane sector of the complex.

It is found in the cell membrane. It carries out the reaction a quinone + NADH + 5 H(+)(in) = a quinol + NAD(+) + 4 H(+)(out). Functionally, NDH-1 shuttles electrons from NADH, via FMN and iron-sulfur (Fe-S) centers, to quinones in the respiratory chain. The immediate electron acceptor for the enzyme in this species is believed to be a menaquinone. Couples the redox reaction to proton translocation (for every two electrons transferred, four hydrogen ions are translocated across the cytoplasmic membrane), and thus conserves the redox energy in a proton gradient. The chain is NADH-quinone oxidoreductase subunit A from Clostridium beijerinckii (strain ATCC 51743 / NCIMB 8052) (Clostridium acetobutylicum).